A 469-amino-acid polypeptide reads, in one-letter code: Probable Xaa-Pro aminopeptidase PEPP (469 aa).

Residues Asp-264, Asp-275, Glu-398, and Glu-438 each coordinate Mn(2+).

Belongs to the peptidase M24B family. Requires Mn(2+) as cofactor.

It carries out the reaction Release of any N-terminal amino acid, including proline, that is linked to proline, even from a dipeptide or tripeptide.. Functionally, catalyzes the removal of a penultimate prolyl residue from the N-termini of peptides. This is Probable Xaa-Pro aminopeptidase PEPP (PEPP) from Ajellomyces capsulatus (strain G186AR / H82 / ATCC MYA-2454 / RMSCC 2432) (Darling's disease fungus).